The following is a 627-amino-acid chain: Lactose permease (627 aa).

The segment at 1-460 is permease; that stretch reads MKKKLVSRLS…AEIVDQLETQ (460 aa). The next 12 helical transmembrane spans lie at 13–33, 46–66, 84–104, 111–131, 159–179, 193–213, 244–264, 281–301, 309–329, 336–356, 392–412, and 419–439; these read AGAFGNDVFYATLSTYFIVFV, IFIITNLITAIRIGEVLLDPL, WVVGGGIISSLALLALFTDFG, PVVYLVIFGIVYLIMDIFYSF, VGSTIGANLVGVVITPIILFF, WFFFALIVAIVGILTSITVGL, LLWLAFAYWFYGLGINTLNAL, LLYTINTFVGLISASFFPSLA, LFYACIAVMLLGIGVFSVASG, VGAEFFFIPQPLAFLVVLMII, WFVSLIALTAGMTTGATASTI, and VFKLAMFALPAVMLLIAVSIF. The region spanning 493–597 is the PTS EIIA type-1 domain; it reads DPVFADKKLG…DDTVIVTVIN (105 aa). The residue at position 545 (His-545) is a Phosphohistidine; by HPr.

In the N-terminal section; belongs to the sodium:galactoside symporter (TC 2.A.2) family.

It is found in the cell membrane. Responsible for transport of beta-galactosides into the cell, with the concomitant uptake of protons (symport system), and also for transport of homologous and heterologous exchange of beta-galactosides. In Lactobacillus delbrueckii subsp. bulgaricus (strain ATCC 11842 / DSM 20081 / BCRC 10696 / JCM 1002 / NBRC 13953 / NCIMB 11778 / NCTC 12712 / WDCM 00102 / Lb 14), this protein is Lactose permease (lacY).